We begin with the raw amino-acid sequence, 501 residues long: Ribose import ATP-binding protein RbsA (501 aa).

2 consecutive ABC transporter domains span residues 5–241 (LQLQ…VGRK) and 252–495 (APGE…VGKQ). 37–44 (GENGAGKS) contributes to the ATP binding site.

The protein belongs to the ABC transporter superfamily. Ribose importer (TC 3.A.1.2.1) family. As to quaternary structure, the complex is composed of an ATP-binding protein (RbsA), two transmembrane proteins (RbsC) and a solute-binding protein (RbsB).

Its subcellular location is the cell inner membrane. It catalyses the reaction D-ribose(out) + ATP + H2O = D-ribose(in) + ADP + phosphate + H(+). Part of the ABC transporter complex RbsABC involved in ribose import. Responsible for energy coupling to the transport system. The protein is Ribose import ATP-binding protein RbsA of Pectobacterium atrosepticum (strain SCRI 1043 / ATCC BAA-672) (Erwinia carotovora subsp. atroseptica).